A 544-amino-acid chain; its full sequence is MSSILTSTVTGIDAIKILINNTADKIINSKYKDEIKHNVFVENTVDESNFNAGVKIKKIYDDYNDFLKEEKRKISERVQDEQTKIEEYLKLEDLFGEKSNIFTLLINQLYSSIENDIVNNHGNVFNENIENNLNTIIHELKNFDEKLSFLERDVKESIKEKIKQANILINKIYDTNIDIRFFPTAQLPNRIDSFIDKRDKLIDELNDIIGVKVIKENSTFKVCLNNGMCIIDDYNKKNLMTLTSDTDDKYISVGYFDDNEQRLKKIEHMIPSASLGALLTFRREDLQNAKNKIGQLTINFADSINSVHTLGYDILGNIGKQVFKISNPEIISSSQNQSYLPTSIKWVDTADAQDTNYIVFLKNNHWTVTRLRDHSVVEPDIYQQDNNTYITFDGIEFKIEGNDAEGNMYMIKPYSKTLNELELLIIKNDLFSISSSDDLNQKNRNNAIKIQHLHQEKIVNKKETLYESYLRFLKSISYKCNDLEEKVPFKRNMIEILNNKKLSESDDMYENYQNLNYEQKCYLANVKVLKMAETIFDEIVDCYS.

It belongs to the flagella basal body rod proteins family.

It localises to the secreted. It is found in the bacterial flagellum. This is Flagellar hook-associated protein 1 (flgK) from Buchnera aphidicola subsp. Schizaphis graminum (strain Sg).